We begin with the raw amino-acid sequence, 284 residues long: MEMO1 family protein LS215_2219 (284 aa).

The protein belongs to the MEMO1 family.

This Saccharolobus islandicus (strain L.S.2.15 / Lassen #1) (Sulfolobus islandicus) protein is MEMO1 family protein LS215_2219.